The primary structure comprises 541 residues: Chaperonin GroEL 1 (541 aa).

Residues 29–32 (TLGP), 86–90 (DGTTT), G413, 479–481 (NAA), and D495 each bind ATP.

Belongs to the chaperonin (HSP60) family. Forms a cylinder of 14 subunits composed of two heptameric rings stacked back-to-back. Interacts with the co-chaperonin GroES.

It is found in the cytoplasm. It carries out the reaction ATP + H2O + a folded polypeptide = ADP + phosphate + an unfolded polypeptide.. Together with its co-chaperonin GroES, plays an essential role in assisting protein folding. The GroEL-GroES system forms a nano-cage that allows encapsulation of the non-native substrate proteins and provides a physical environment optimized to promote and accelerate protein folding. This is Chaperonin GroEL 1 from Synechocystis sp. (strain ATCC 27184 / PCC 6803 / Kazusa).